The primary structure comprises 832 residues: uncharacterized protein (832 aa).

This is an uncharacterized protein from Rickettsia bellii (strain RML369-C).